The sequence spans 188 residues: Probable nicotinate-nucleotide adenylyltransferase (188 aa).

It belongs to the NadD family.

It carries out the reaction nicotinate beta-D-ribonucleotide + ATP + H(+) = deamido-NAD(+) + diphosphate. It functions in the pathway cofactor biosynthesis; NAD(+) biosynthesis; deamido-NAD(+) from nicotinate D-ribonucleotide: step 1/1. Functionally, catalyzes the reversible adenylation of nicotinate mononucleotide (NaMN) to nicotinic acid adenine dinucleotide (NaAD). This chain is Probable nicotinate-nucleotide adenylyltransferase, found in Rhizobium meliloti (strain 1021) (Ensifer meliloti).